We begin with the raw amino-acid sequence, 62 residues long: Sperm protamine P1 (62 aa).

The disordered stretch occupies residues 1-62; that stretch reads MARYRHSRSR…RYSRRRRRRY (62 aa).

The protein belongs to the protamine P1 family. Testis.

It is found in the nucleus. It localises to the chromosome. Protamines substitute for histones in the chromatin of sperm during the haploid phase of spermatogenesis. They compact sperm DNA into a highly condensed, stable and inactive complex. The protein is Sperm protamine P1 (PRM1) of Dendrolagus dorianus (Doria's tree-kangaroo).